Reading from the N-terminus, the 493-residue chain is MVAQNSDKMRALALKLFEINAFKFGDFKMKVGINSPVYFDLRVIVSYPDVMQTVSDLLVEHIKDKQLSAKHVCGVPYTALPLATIVSVQQGTPMLVRRKEAKAYGTKKLVEGIFNAGDTCLIVEDVVTSGSSILDTVRDLQGEGIVVTDAVVVVDREQGGVANIAKHGVRMHSLFTLSFLLNTLHEAGRIEKSTVEAVAKYIAAVQINSDGTFVGGDKGDVVRANDLQRTKLTYENRANLAKSAVAKRLFNLIASKQTNLCLAADLTHADEILDVADKCGPYICLLKTHVDIVEDFSDKFIADLQALAQRHNFLLMEDRKFADIGNTVSLQYGKGIYKISSWADLVTAHTLPGRSILQGLKAGLGEGGAGKERGVFLLAEMSASGNLIDAKYKENSNKIATEGADVDFVAGVVCQSSDAFAFPGLLQLTPGVKIDEGVDQLGQQYQSPEHVVKERGADIGVVGRGILKASSPKQAAQTYRDRLWAAYQDRVAK.

The segment at 1–207 is OPRTase; sequence MVAQNSDKMR…VAKYIAAVQI (207 aa). Residues 208-233 are domain linker; it reads NSDGTFVGGDKGDVVRANDLQRTKLT. Residues 234–493 form an OMPdecase region; the sequence is YENRANLAKS…WAAYQDRVAK (260 aa). Lys-320 is a catalytic residue.

The protein in the N-terminal section; belongs to the purine/pyrimidine phosphoribosyltransferase family. This sequence in the C-terminal section; belongs to the OMP decarboxylase family.

The catalysed reaction is orotidine 5'-phosphate + diphosphate = orotate + 5-phospho-alpha-D-ribose 1-diphosphate. The enzyme catalyses orotidine 5'-phosphate + H(+) = UMP + CO2. It participates in pyrimidine metabolism; UMP biosynthesis via de novo pathway; UMP from orotate: step 1/2. Its pathway is pyrimidine metabolism; UMP biosynthesis via de novo pathway; UMP from orotate: step 2/2. In Drosophila melanogaster (Fruit fly), this protein is Uridine 5'-monophosphate synthase (r-l).